The sequence spans 774 residues: Transmembrane GTPase fzo-1 (774 aa).

Positions methionine 1–arginine 29 are disordered. Residues methionine 1–valine 617 are Cytoplasmic-facing. A compositionally biased stretch (basic residues) spans arginine 20 to arginine 29. The stretch at tyrosine 51–asparagine 71 forms a coiled coil. Residues glutamine 97 to glutamate 352 form the Dynamin-type G domain. Residues glycine 107–serine 114 are G1 motif. Serine 110–threonine 115 contributes to the GTP binding site. The tract at residues threonine 133–threonine 134 is G2 motif. The segment at aspartate 211–glycine 214 is G3 motif. A GTP-binding site is contributed by asparagine 270–aspartate 273. Residues asparagine 270–aspartate 273 form a G4 motif region. Position 300 (glutamate 300) is a region of interest, G5 motif. Residue serine 317 participates in GTP binding. Residues asparagine 385 to arginine 415 adopt a coiled-coil conformation. The chain crosses the membrane as a helical span at residues leucine 618–valine 638. The Mitochondrial intermembrane segment spans residues tyrosine 639–lysine 640. Residues alanine 641–glutamate 661 form a helical membrane-spanning segment. Over arginine 662–proline 774 the chain is Cytoplasmic.

It belongs to the TRAFAC class dynamin-like GTPase superfamily. Dynamin/Fzo/YdjA family. Mitofusin subfamily. Interacts with ced-9; interaction may be suppressed by interaction of ced-9 with egl-1.

The protein localises to the mitochondrion outer membrane. The enzyme catalyses GTP + H2O = GDP + phosphate + H(+). Probable transmembrane GTPase. Mediates mitochondrial fusion. Fusion of mitochondria occurs in many cell types and constitutes an important step in mitochondria morphology, which is balanced between fusion and fission. Dispensable for normal apoptotic processes during embryonic development. This is Transmembrane GTPase fzo-1 from Caenorhabditis elegans.